The chain runs to 203 residues: Sporulation delaying protein C (203 aa).

Residues 1–32 form the signal peptide; it reads MKSKLLRLLIVSMVTILVFSLVGLSKESSTSA. Positions 33–140 are cleaved as a propeptide — removed in mature form; that stretch reads KENHTFSGED…KYSSNKVTPS (108 aa). Cys141 and Cys147 are oxidised to a cystine. Residues 183 to 203 constitute a propeptide, removed in mature form; sequence SASNNSDLEAAAAKTLKLIHQ.

As to quaternary structure, proprotein probably interacts with chaperone CsaA. Post-translationally, production of active SDP (able to induce SdpI and kill cells) is a multi-step process that requires signal peptide cleavage (probably by SipS or SipT) as well as SdpA and SdpB. The disulfide bond is not required for maximum toxicity.

It localises to the secreted. Its function is as follows. Produces a 42-residue extracellular sporulation delaying protein (SDP) that collapses the proton motive force (probably both the membrane potential and pH gradient) across the cell membrane, which leads to autolysis; may form a proton channel. Induces the lysis of other B.subtilis cells that have not entered the sporulation pathway, inducing cannibalism to provide a source of nutrients to support sporulation, and at the same time delaying commitment to the energetically expensive and irreversible onset of sporulation. Addition of SDP to liquid cultures halts growth, leads to increased cell permeability and eventually cell lysis in a significant subset of the population, although some cells survive and resume growth after a lag period. Effects of SDP are irreversible within 10 minutes. Addition of SDP to solid cultures induces killing, it is much more effective than SKF (AC O31422). Has antibiotic action against Gram-positive Firmicutes (L.acidophilus, M.megaterium, P.polymyxa, S.aureus, S.epidermidis) but not Actinobacteria M.luteus or Gram-negative P.aeruginosa or K.pneumoniae. SDP induces expression of the sdpR-sdpI operon. Its maturation is dependent on SdpA and SdpB. Also functions as a ligand, binds to SdpI triggering a signal transduction cascade that protects the cell against the toxic effects of its own SDP. The protein is Sporulation delaying protein C of Bacillus subtilis (strain 168).